Consider the following 676-residue polypeptide: Heat shock cognate HSP70 protein (676 aa).

The interval 613–676 is disordered; it reads SARREGKDGW…RIEAINANTE (64 aa). The segment covering 630–646 has biased composition (acidic residues); that stretch reads GSGDDNDGDDNSDEEDE.

The protein belongs to the heat shock protein 70 family.

The sequence is that of Heat shock cognate HSP70 protein from Trypanosoma brucei brucei.